Here is an 83-residue protein sequence, read N- to C-terminus: Cell division topological specificity factor (83 aa).

Belongs to the MinE family.

Functionally, prevents the cell division inhibition by proteins MinC and MinD at internal division sites while permitting inhibition at polar sites. This ensures cell division at the proper site by restricting the formation of a division septum at the midpoint of the long axis of the cell. The chain is Cell division topological specificity factor from Buchnera aphidicola subsp. Acyrthosiphon pisum (strain 5A).